Reading from the N-terminus, the 498-residue chain is PE-PGRS family protein PE_PGRS33 (498 aa).

An essential for translocation to the cell surface region spans residues 1-30; sequence MSFVVTIPEALAAVATDLAGIGSTIGTANA. The PE domain occupies 1-93; that stretch reads MSFVVTIPEA…AGSYAAAEAA (93 aa). The segment at 140-260 is interacts with TLR2; the sequence is GNGGAGGSGA…GLFFGVGGAG (121 aa).

The protein belongs to the mycobacterial PE family. PGRS subfamily. In terms of assembly, interacts with human TLR2.

Its subcellular location is the secreted. The protein localises to the cell wall. The protein resides in the cell surface. It is found in the cell outer membrane. With respect to regulation, binding of Ca(2+) to PE_PGRS33 induces conformational changes and increases affinity for TLR2. Induces TNF-alpha release through human Toll-like receptor 2 (TLR2) signaling pathway, leading to macrophage apoptosis. The signaling pathway involves TLR2-dependent activation of the mitogen-activated protein kinase kinase kinase 5 (ASK1), which activates the p38 and JNK MAPKs, leading to enhanced expression of TNF-alpha and tumor necrosis factor receptor superfamily member 1A (TNFRI) genes. Signals are amplified through classical caspase 8-dependent mitochondrial release of cytochrome c, leading to the activation of caspases 9 and 3. Mediates Ca(2+)-dependent up-regulation of the anti-inflammatory cytokine IL-10. Mediates entry into macrophages in a TLR2-dependent mechanism and activates the TLR2-dependent pro-adhesive pathway. The protein is PE-PGRS family protein PE_PGRS33 of Mycobacterium tuberculosis (strain ATCC 25618 / H37Rv).